We begin with the raw amino-acid sequence, 1007 residues long: MATRPASRQRRASSAAAAVAVVRSSPQPQQQQQQQLPIPQSGSPTSTTTTTTSSSRLTPELSLDGPASPLFAGLDEDPAPKENVTVTVRFRPLSPREIRQGEEVAWYADGDTVVRSEQNPSVAYAYDRVFAPTTTTRQVYDVAAQHVVSGAMEGVNGTIFAYGVTSSGKTHTMHGDQRSPGIIPLAVKDAFSIIQETPNREFLLRVSYLEIYNEVVNDLLNPAGQNLRIREDPQGTFVEGIKEEVVLSPAHALSLIAAGEEHRHVGSTNFNLLSSRSHTIFTLTVESSPCGESNEGEAVTFSQLNLIDLAGSESSRAETTGVRRKEGSYINKSLLTLGTVISKLTDGKATHIPFRDSKLTRLLQSSLSGQGRVSLICTVTPASSNSEETHNTLKFAHRAKRIEVQASQNKIIDEKSLIKKYQNEIRRLKEELEQLKMGIITGTPVKDAGEDNIILWKQKLEDGNVKLQSRLEQEEEAKAALLARIQRLTKLILVSTKATQTSRFSPHPGPRRRHSFGEEELAYLPYKRRDIVLDNESNELLSPVEGLGMTLEDSKEEKKNRKGILNWFKLRKREGGASILTSSEGDKSSLTKSTAPSTPIGESVNFPSEPRISNSLVGESASVDLFSIGHGEFATDSLHGEETPLASRKTIDHVDLLREQLKILSGEVALHTSVLKRLTEEAGRSPNNEKIQMEMKKVNDEIKGKKHQIASLERQIPHSISNNQGMADKLELTPSYAELLEQLNEKSFDLEVKAADNRVIQDQLNEKTTECMELQEEVAHLKEQLYQTLQAKDSLSNSIMMQKNAGINHETDNHADQELSVPREVPGETSPKEPQSVEIDELKQKVCELIEVKAQLETRNQKLLEESTYAKGLASAAGVELKALSEEVTKLMNQNEKLASELASVRSPTPRRANSGLRGTRRDSISRRHEPAPRRDNNAGYEREKALEAVLMEKEQKEAELQRRIEESKQKEAFLESELANMWVLVAKLKKSQGHDLEDFDTKYIGS.

The N-terminal 53 residues, 1-53 (MATRPASRQRRASSAAAAVAVVRSSPQPQQQQQQQLPIPQSGSPTSTTTTTTS), are a transit peptide targeting the chloroplast. Residues 1–55 (MATRPASRQRRASSAAAAVAVVRSSPQPQQQQQQQLPIPQSGSPTSTTTTTTSSS) show a composition bias toward low complexity. Positions 1–79 (MATRPASRQR…LFAGLDEDPA (79 aa)) are disordered. A Kinesin motor domain is found at 83–402 (NVTVTVRFRP…LKFAHRAKRI (320 aa)). 163–170 (GVTSSGKT) contributes to the ATP binding site. Residues 403-495 (EVQASQNKII…QRLTKLILVS (93 aa)) adopt a coiled-coil conformation. The tract at residues 579–607 (ILTSSEGDKSSLTKSTAPSTPIGESVNFP) is disordered. Coiled coils occupy residues 687–716 (NNEK…ERQI), 754–791 (AADN…TLQA), and 836–907 (SVEI…SVRS). Residues 901-941 (ELASVRSPTPRRANSGLRGTRRDSISRRHEPAPRRDNNAGY) form a disordered region. The span at 920–941 (TRRDSISRRHEPAPRRDNNAGY) shows a compositional bias: basic and acidic residues. Residues 942 to 982 (EREKALEAVLMEKEQKEAELQRRIEESKQKEAFLESELANM) are a coiled coil.

It belongs to the TRAFAC class myosin-kinesin ATPase superfamily. Kinesin family. KIN-7 subfamily. As to quaternary structure, binds microtubules. Homodimer. Mg(2+) is required as a cofactor.

Its subcellular location is the plastid. The protein resides in the chloroplast. Functionally, probable minus end-directed motor protein with a microtubule-enhanced ATPase activity. Binds ATP/ADP in vitro. Retains total enzymatic activity even after the removal of the ADP bound in the active site. The protein is Kinesin-like protein KIN-7D, chloroplastic of Oryza sativa subsp. japonica (Rice).